Reading from the N-terminus, the 378-residue chain is Plant intracellular Ras-group-related LRR protein 8 (378 aa).

One can recognise a Ubiquitin-like domain in the interval 10–86 (PTITVQVKFG…VMLMASQGLH (77 aa)). A disordered region spans residues 85-120 (LHQGDGPITKNSSVPAPSTRRASNVKEAQIQKSDTN). Positions 93-106 (TKNSSVPAPSTRRA) are enriched in polar residues. 9 LRR repeats span residues 129 to 152 (WKATGIIALSDSSLKAVPEEVWGC), 153 to 176 (GSSIRVLDVSNNCIEAIPQEIAAL), 178 to 201 (SLQKLILTANDIADGNISWEGLTC), 202 to 225 (VQTLTVLSLSQNRLVTLPSSLGSI), 226 to 250 (THLRELRIANNRLENLPVEIGLLKH), 252 to 271 (EILIANNNRITSLPSSIGGC), 272 to 293 (ESLNEVDLSSNLLAELPEAFGN), 294 to 317 (LQHLKALSVRNNGLTSLPSAFFIK), and 319 to 344 (SQLITLDLHGTEITNDVLRQVDGWEE).

Belongs to the SHOC2 family. As to expression, widely expressed except in panicles.

Leucine-rich repeat protein that likely mediates protein interactions, possibly in the context of signal transduction. In Oryza sativa subsp. japonica (Rice), this protein is Plant intracellular Ras-group-related LRR protein 8 (IRL8).